The sequence spans 945 residues: Isoleucine--tRNA ligase (945 aa).

The 'HIGH' region motif lies at 67–77 (PYANGQIHLGH). An L-isoleucyl-5'-AMP-binding site is contributed by E573. The short motif at 614 to 618 (KMSKS) is the 'KMSKS' region element. Residue K617 coordinates ATP. 4 residues coordinate Zn(2+): C908, C911, C928, and C931.

The protein belongs to the class-I aminoacyl-tRNA synthetase family. IleS type 1 subfamily. Monomer. Requires Zn(2+) as cofactor.

The protein resides in the cytoplasm. It catalyses the reaction tRNA(Ile) + L-isoleucine + ATP = L-isoleucyl-tRNA(Ile) + AMP + diphosphate. Catalyzes the attachment of isoleucine to tRNA(Ile). As IleRS can inadvertently accommodate and process structurally similar amino acids such as valine, to avoid such errors it has two additional distinct tRNA(Ile)-dependent editing activities. One activity is designated as 'pretransfer' editing and involves the hydrolysis of activated Val-AMP. The other activity is designated 'posttransfer' editing and involves deacylation of mischarged Val-tRNA(Ile). This is Isoleucine--tRNA ligase from Acinetobacter baylyi (strain ATCC 33305 / BD413 / ADP1).